A 315-amino-acid polypeptide reads, in one-letter code: Ribose-phosphate pyrophosphokinase (315 aa).

Residues 37-39 (DSE) and 96-97 (RQ) contribute to the ATP site. Histidine 131 and aspartate 170 together coordinate Mg(2+). Residue lysine 194 is part of the active site. D-ribose 5-phosphate-binding positions include arginine 196, aspartate 220, and 224–228 (DTGGT).

Belongs to the ribose-phosphate pyrophosphokinase family. Class I subfamily. Homohexamer. Mg(2+) is required as a cofactor.

The protein localises to the cytoplasm. It carries out the reaction D-ribose 5-phosphate + ATP = 5-phospho-alpha-D-ribose 1-diphosphate + AMP + H(+). It participates in metabolic intermediate biosynthesis; 5-phospho-alpha-D-ribose 1-diphosphate biosynthesis; 5-phospho-alpha-D-ribose 1-diphosphate from D-ribose 5-phosphate (route I): step 1/1. Its function is as follows. Involved in the biosynthesis of the central metabolite phospho-alpha-D-ribosyl-1-pyrophosphate (PRPP) via the transfer of pyrophosphoryl group from ATP to 1-hydroxyl of ribose-5-phosphate (Rib-5-P). This Marinomonas sp. (strain MWYL1) protein is Ribose-phosphate pyrophosphokinase.